The sequence spans 539 residues: GMP synthase [glutamine-hydrolyzing] (539 aa).

Residues 4 to 202 (KILILDFGSQ…VLQIAGAKPD (199 aa)) form the Glutamine amidotransferase type-1 domain. The Nucleophile role is filled by Cys81. Active-site residues include His176 and Glu178. A GMPS ATP-PPase domain is found at 203–395 (WIMKNHIEEA…LGLPPEMVYR (193 aa)). Residue 230 to 236 (SGGVDSS) participates in ATP binding.

Homodimer.

It catalyses the reaction XMP + L-glutamine + ATP + H2O = GMP + L-glutamate + AMP + diphosphate + 2 H(+). The protein operates within purine metabolism; GMP biosynthesis; GMP from XMP (L-Gln route): step 1/1. Catalyzes the synthesis of GMP from XMP. The polypeptide is GMP synthase [glutamine-hydrolyzing] (Burkholderia orbicola (strain AU 1054)).